We begin with the raw amino-acid sequence, 916 residues long: Rab3 GTPase-activating protein catalytic subunit (916 aa).

Residues 530–574 form a disordered region; the sequence is NSKRKSEGMVGKASSEEEEDEDDDEGEFFDCDDLTAGAGSPTKAV. Residues serine 543 and serine 544 each carry the phosphoserine modification. The segment covering 545-562 has biased composition (acidic residues); the sequence is EEEEDEDDDEGEFFDCDD.

It belongs to the Rab3-GAP catalytic subunit family. The Rab3 GTPase-activating complex is a heterodimer composed of Rab3GAP1 and Rab3-GAP.

It localises to the cytoplasm. Catalytic subunit of the Rab3 GTPase-activating (Rab3GAP) complex composed of Rab3-GAP and Rab3GAP1, which has both GTPase-activating protein (GAP) activity towards Rab3, and guanine nucleotide exchange factor (GEF) activity towards Rab18. As part of the Rab3GAP complex, required for the rapid induction and sustained expression of synaptic homeostasis at the neuromuscular junction (NMJ). Also participates in the regulation of autophagy in tissues such as larval fat cells and adult muscles. The Rab3GAP complex, acts as a GAP for Rab3 by converting active Rab3-GTP to the inactive form Rab3-GDP. At the neuromuscular junction (NMJ), forms a presynaptic signaling mechanism with Rab3 that regulates progression of synaptic homeostasis at a late stage of vesicle release. Within this mechanism Rab3-GTP acts, directly or indirectly, to inhibit the progression of synaptic homeostasis, and Rab3-GAP functions to inactivate this action of Rab3-GTP. The Rab3GAP complex, acts as a GEF for Rab18 by promoting the conversion of inactive Rab18-GDP to the active form Rab18-GTP. Regulates autophagy as part of a Rab3GAP-Rab18 module. Once Rab18 is activated by the GEF Rab3GAP complex, the Rab3GAP-Rab18 module localizes to autophagosomes, and regulates autolysosome formation and maturation together with the Rab18 interacting effector, the PI3K/Vps34 Complex I. The sequence is that of Rab3 GTPase-activating protein catalytic subunit from Drosophila melanogaster (Fruit fly).